We begin with the raw amino-acid sequence, 240 residues long: Proteasome subunit beta 1 (240 aa).

The propeptide at Met-1 to Gly-46 is removed in mature form; by autocatalysis. Residues Met-1 to Thr-48 form a disordered region. Catalysis depends on Thr-47, which acts as the Nucleophile.

Belongs to the peptidase T1B family. As to quaternary structure, the 20S proteasome core is composed of 14 alpha and 14 beta subunits that assemble into four stacked heptameric rings, resulting in a barrel-shaped structure. The two inner rings, each composed of seven catalytic beta subunits, are sandwiched by two outer rings, each composed of seven alpha subunits. The catalytic chamber with the active sites is on the inside of the barrel. Has a gated structure, the ends of the cylinder being occluded by the N-termini of the alpha-subunits. Is capped at one or both ends by the proteasome regulatory ATPase, PAN.

The protein localises to the cytoplasm. The catalysed reaction is Cleavage of peptide bonds with very broad specificity.. Its activity is regulated as follows. The formation of the proteasomal ATPase PAN-20S proteasome complex, via the docking of the C-termini of PAN into the intersubunit pockets in the alpha-rings, triggers opening of the gate for substrate entry. Interconversion between the open-gate and close-gate conformations leads to a dynamic regulation of the 20S proteasome proteolysis activity. Functionally, component of the proteasome core, a large protease complex with broad specificity involved in protein degradation. The chain is Proteasome subunit beta 1 from Haloarcula marismortui (strain ATCC 43049 / DSM 3752 / JCM 8966 / VKM B-1809) (Halobacterium marismortui).